The sequence spans 91 residues: Large ribosomal subunit protein uL23c (91 aa).

The protein belongs to the universal ribosomal protein uL23 family. In terms of assembly, part of the 50S ribosomal subunit.

Its subcellular location is the plastid. The protein localises to the chloroplast. Binds to 23S rRNA. The chain is Large ribosomal subunit protein uL23c (rpl23) from Pinus koraiensis (Korean pine).